A 517-amino-acid polypeptide reads, in one-letter code: UDP-N-acetylmuramyl-tripeptide synthetase (517 aa).

Thr48 is a UDP-N-acetyl-alpha-D-muramoyl-L-alanyl-D-glutamate binding site. 125–131 provides a ligand contact to ATP; it reads GTKGKTT. UDP-N-acetyl-alpha-D-muramoyl-L-alanyl-D-glutamate is bound by residues 169 to 170, Ser196, and Arg204; that span reads TT. An N6-carboxylysine modification is found at Lys238.

It belongs to the MurCDEF family. MurE subfamily. Carboxylation is probably crucial for Mg(2+) binding and, consequently, for the gamma-phosphate positioning of ATP.

The protein resides in the cytoplasm. It functions in the pathway cell wall biogenesis; peptidoglycan biosynthesis. In terms of biological role, catalyzes the addition of an amino acid to the nucleotide precursor UDP-N-acetylmuramoyl-L-alanyl-D-glutamate (UMAG) in the biosynthesis of bacterial cell-wall peptidoglycan. The protein is UDP-N-acetylmuramyl-tripeptide synthetase of Bifidobacterium longum (strain NCC 2705).